A 137-amino-acid chain; its full sequence is Small ribosomal subunit protein uS12 (137 aa).

The interval methionine 1–proline 55 is disordered. The residue at position 102 (aspartate 102) is a 3-methylthioaspartic acid. Residues serine 118 to asparagine 137 are disordered.

Belongs to the universal ribosomal protein uS12 family. In terms of assembly, part of the 30S ribosomal subunit. Contacts proteins S8 and S17. May interact with IF1 in the 30S initiation complex.

In terms of biological role, with S4 and S5 plays an important role in translational accuracy. Its function is as follows. Interacts with and stabilizes bases of the 16S rRNA that are involved in tRNA selection in the A site and with the mRNA backbone. Located at the interface of the 30S and 50S subunits, it traverses the body of the 30S subunit contacting proteins on the other side and probably holding the rRNA structure together. The combined cluster of proteins S8, S12 and S17 appears to hold together the shoulder and platform of the 30S subunit. The polypeptide is Small ribosomal subunit protein uS12 (Staphylococcus epidermidis (strain ATCC 35984 / DSM 28319 / BCRC 17069 / CCUG 31568 / BM 3577 / RP62A)).